We begin with the raw amino-acid sequence, 166 residues long: Probable DHNTP pyrophosphohydrolase (166 aa).

Positions 42 to 166 (DLQLSASALV…FKKYYRYKNI (125 aa)) constitute a Nudix hydrolase domain. The Nudix box signature appears at 73-94 (GHVELKESPLDTAIREFHEETG). The Mg(2+) site is built by Glu88 and Glu92.

It belongs to the Nudix hydrolase family. In terms of assembly, monomer. The cofactor is Mg(2+).

The protein operates within cofactor biosynthesis; tetrahydrofolate biosynthesis; 2-amino-4-hydroxy-6-hydroxymethyl-7,8-dihydropteridine diphosphate from 7,8-dihydroneopterin triphosphate: step 1/4. Functionally, probably mediates the removal of pyrophosphate from dihydroneopterin triphosphate (DHNTP), a possible step in the pterin branch of the folate synthesis pathway. The protein is Probable DHNTP pyrophosphohydrolase (folQ) of Lactococcus lactis subsp. cremoris (strain MG1363).